A 208-amino-acid chain; its full sequence is MLNSRSELLDQFLRQQGIRDEAILAAIRELPRERFIPEALSHQAYQNNALPIGEGQTISQPYIVAKMTELLELTPTSNVLEVGTGSGYQTAVLAKLVEHVNSIERIKSLQWNAKRLLKQLDIYNVSTKHGDGWKGWESKAPFDAIIVTAAAESIPNDLLFQLKDNGHLVIPIGEESQQLLRITRQGEEFFSEVIEEVRFVPLVAGELA.

Ser59 is a catalytic residue.

It belongs to the methyltransferase superfamily. L-isoaspartyl/D-aspartyl protein methyltransferase family.

It localises to the cytoplasm. The enzyme catalyses [protein]-L-isoaspartate + S-adenosyl-L-methionine = [protein]-L-isoaspartate alpha-methyl ester + S-adenosyl-L-homocysteine. Its function is as follows. Catalyzes the methyl esterification of L-isoaspartyl residues in peptides and proteins that result from spontaneous decomposition of normal L-aspartyl and L-asparaginyl residues. It plays a role in the repair and/or degradation of damaged proteins. The chain is Protein-L-isoaspartate O-methyltransferase from Aliivibrio fischeri (strain ATCC 700601 / ES114) (Vibrio fischeri).